A 228-amino-acid polypeptide reads, in one-letter code: Cytochrome b-c1 complex subunit Rieske, mitochondrial (228 aa).

Residues 1–26 constitute a mitochondrion transit peptide; sequence MLAKQFISKSLASSLRRLLPVSSTAS. The Mitochondrial matrix segment spans residues 27-63; it reads SLKGSMMTIPKFTSIRTYTDSPEMPDFSEYQTKSTGD. A helical membrane pass occupies residues 64-93; that stretch reads RSRVISYAMVGTMGALTAAGAQATVHDFLA. The Mitochondrial intermembrane segment spans residues 94 to 228; it reads SWSASADVLA…TFEGSKIIIG (135 aa). Residues 139 to 227 form the Rieske domain; sequence IQEANSVDIS…YTFEGSKIII (89 aa). 4 residues coordinate [2Fe-2S] cluster: Cys172, His174, Cys191, and His194. Residues Cys177 and Cys193 are joined by a disulfide bond.

Belongs to the Rieske iron-sulfur protein family. Component of the ubiquinol-cytochrome c oxidoreductase (cytochrome b-c1 complex, complex III, CIII), a multisubunit enzyme composed of 3 respiratory subunits cytochrome b, cytochrome c1 and Rieske protein, 2 core protein subunits, and additional low-molecular weight protein subunits. The complex exists as an obligatory dimer and forms supercomplexes (SCs) in the inner mitochondrial membrane with cytochrome c oxidase (complex IV, CIV). [2Fe-2S] cluster is required as a cofactor.

The protein resides in the mitochondrion inner membrane. It carries out the reaction a quinol + 2 Fe(III)-[cytochrome c](out) = a quinone + 2 Fe(II)-[cytochrome c](out) + 2 H(+)(out). Functionally, component of the ubiquinol-cytochrome c oxidoreductase, a multisubunit transmembrane complex that is part of the mitochondrial electron transport chain which drives oxidative phosphorylation. The respiratory chain contains 3 multisubunit complexes succinate dehydrogenase (complex II, CII), ubiquinol-cytochrome c oxidoreductase (cytochrome b-c1 complex, complex III, CIII) and cytochrome c oxidase (complex IV, CIV), that cooperate to transfer electrons derived from NADH and succinate to molecular oxygen, creating an electrochemical gradient over the inner membrane that drives transmembrane transport and the ATP synthase. The cytochrome b-c1 complex catalyzes electron transfer from ubiquinol to cytochrome c, linking this redox reaction to translocation of protons across the mitochondrial inner membrane, with protons being carried across the membrane as hydrogens on the quinol. In the process called Q cycle, 2 protons are consumed from the matrix, 4 protons are released into the intermembrane space and 2 electrons are passed to cytochrome c. The Rieske protein is a catalytic core subunit containing a [2Fe-2S] iron-sulfur cluster. It cycles between 2 conformational states during catalysis to transfer electrons from the quinol bound in the Q(0) site in cytochrome b to cytochrome c1. The polypeptide is Cytochrome b-c1 complex subunit Rieske, mitochondrial (rip1) (Schizosaccharomyces pombe (strain 972 / ATCC 24843) (Fission yeast)).